Here is a 119-residue protein sequence, read N- to C-terminus: Large ribosomal subunit protein uL18 (119 aa).

This sequence belongs to the universal ribosomal protein uL18 family. In terms of assembly, part of the 50S ribosomal subunit; part of the 5S rRNA/L5/L18/L25 subcomplex. Contacts the 5S and 23S rRNAs.

In terms of biological role, this is one of the proteins that bind and probably mediate the attachment of the 5S RNA into the large ribosomal subunit, where it forms part of the central protuberance. This Mycoplasmoides gallisepticum (strain R(low / passage 15 / clone 2)) (Mycoplasma gallisepticum) protein is Large ribosomal subunit protein uL18.